The following is a 168-amino-acid chain: CASP-like protein 4D1 (168 aa).

Residues M1–R11 lie on the Cytoplasmic side of the membrane. Residues M12–L32 form a helical membrane-spanning segment. Over T33 to R57 the chain is Extracellular. Residues Y58 to L78 traverse the membrane as a helical segment. The Cytoplasmic portion of the chain corresponds to Y79 to D97. A helical transmembrane segment spans residues F98 to S118. The Extracellular segment spans residues T119–S144. Residues L145–P165 form a helical membrane-spanning segment. Residues K166–V168 are Cytoplasmic-facing.

It belongs to the Casparian strip membrane proteins (CASP) family. As to quaternary structure, homodimer and heterodimers.

It localises to the cell membrane. The protein is CASP-like protein 4D1 of Ricinus communis (Castor bean).